The following is a 717-amino-acid chain: Homeobox protein araucan (717 aa).

Disordered stretches follow at residues 46–80, 94–130, 317–371, 395–418, 478–516, 549–615, and 675–717; these read APAMSPTGGQDCQGSQPSGGAGGDASSGALSPNAL, GGSSAGGGGPADLATGGSLDGNGVGTTPTAGGAGGGG, NKMT…AIDE, SGGYPGGGGSSSGHPGGYHPYHHQ, TPPPAYMGHQSMPLQQQQQQQQQQQQAQHQYPPSEAGRD, TNNS…ASQR, and ARLG…KFTN. Residues 94 to 103 show a composition bias toward gly residues; that stretch reads GGSSAGGGGP. The homeobox; TALE-type DNA-binding region spans 255-317; sequence LAARRKNATR…NARRRLKKEN (63 aa). A compositionally biased stretch (basic and acidic residues) spans 317–327; it reads NKMTWEPKNRT. Residue Ser-336 is modified to Phosphoserine. The span at 337-347 shows a compositional bias: basic and acidic residues; that stretch reads DDEKDKEDLEP. Residues 395 to 410 show a composition bias toward gly residues; it reads SGGYPGGGGSSSGHPG. 4 stretches are compositionally biased toward low complexity: residues 492–507, 559–589, 599–614, and 687–698; these read QQQQQQQQQQQQAQHQ, PPQQQQPQQQQQQLQQGGTIHTTGSSSGPII, QQQQQLQQQSQSTASQ, and SSGNSSSSSSSS.

This sequence belongs to the TALE/IRO homeobox family.

The protein resides in the nucleus. Functionally, controls proneural and vein forming genes. Positive transcriptional controller of AC-SC (achaete-scute). May act as an activator that interacts with the transcriptional complex assembled on the AC and SC promoters and participates in transcription initiation. The chain is Homeobox protein araucan (ara) from Drosophila melanogaster (Fruit fly).